Reading from the N-terminus, the 451-residue chain is Cyclin-dependent kinase 18 (451 aa).

The tract at residues 39-61 is disordered; sequence RNEDGRDEPGQLSPGVQYQQRQN. The residue at position 51 (Ser51) is a Phosphoserine. Polar residues predominate over residues 52–61; the sequence is PGVQYQQRQN. Phosphoserine occurs at positions 66 and 109. The region spanning 121–402 is the Protein kinase domain; the sequence is YVKLDKLGEG…AEAALSHPYF (282 aa). Residues 127–135 and Lys150 each bind ATP; that span reads LGEGTYATV. Residue Asp242 is the Proton acceptor of the active site. A phosphoserine mark is found at Ser417 and Ser420.

This sequence belongs to the protein kinase superfamily. CMGC Ser/Thr protein kinase family. CDC2/CDKX subfamily. As to expression, in brain, kidney, intestine and at a much lower level, in fetal tissues.

It carries out the reaction L-seryl-[protein] + ATP = O-phospho-L-seryl-[protein] + ADP + H(+). The catalysed reaction is L-threonyl-[protein] + ATP = O-phospho-L-threonyl-[protein] + ADP + H(+). In terms of biological role, may play a role in signal transduction cascades in terminally differentiated cells. The chain is Cyclin-dependent kinase 18 (Cdk18) from Rattus norvegicus (Rat).